A 145-amino-acid polypeptide reads, in one-letter code: 3-hydroxyacyl-[acyl-carrier-protein] dehydratase FabZ (145 aa).

The active site involves H49.

The protein belongs to the thioester dehydratase family. FabZ subfamily.

The protein resides in the cytoplasm. It catalyses the reaction a (3R)-hydroxyacyl-[ACP] = a (2E)-enoyl-[ACP] + H2O. Its function is as follows. Involved in unsaturated fatty acids biosynthesis. Catalyzes the dehydration of short chain beta-hydroxyacyl-ACPs and long chain saturated and unsaturated beta-hydroxyacyl-ACPs. The sequence is that of 3-hydroxyacyl-[acyl-carrier-protein] dehydratase FabZ from Ehrlichia ruminantium (strain Gardel).